The chain runs to 420 residues: Carboxypeptidase A4 (420 aa).

The N-terminal stretch at 1–16 (MKWLLFFGALIGAGIC) is a signal peptide. A propeptide spans 17 to 113 (GRDKFFGDQV…EMQHNEGIER (97 aa)) (activation peptide). Residues P69, V71, N118, Y122, H123, E126, and F162 each contribute to the a protein site. Residues 121–415 (AYHPLEAIYH…LGLKTIMEHV (295 aa)) enclose the Peptidase M14 domain. Zn(2+) contacts are provided by H180 and E183. Residues C249 and C272 are joined by a disulfide bond. A glycan (N-linked (GlcNAc...) asparagine) is linked at N259. Residue H307 coordinates Zn(2+). The active-site Proton donor/acceptor is E381.

Belongs to the peptidase M14 family. As to quaternary structure, interacts with LXN. Zn(2+) serves as cofactor.

It is found in the secreted. In terms of biological role, metalloprotease that cleaves hydrophobic C-terminal residues with a preference for -Phe, -Leu, -Ile, -Met, -Tyr and -Val. May function in peptide hormone and/or neuropeptide catabolism. The chain is Carboxypeptidase A4 (Cpa4) from Mus musculus (Mouse).